A 238-amino-acid polypeptide reads, in one-letter code: Ion-translocating oxidoreductase complex subunit E (238 aa).

A run of 6 helical transmembrane segments spans residues 20-40 (ALVQ…VVNA), 41-61 (LGLG…VSLI), 72-92 (PAFV…MKAF), 95-115 (ELYQ…AVLG), 130-150 (AVDG…VGAV), and 185-205 (NVIF…LIAA).

The protein belongs to the NqrDE/RnfAE family. As to quaternary structure, the complex is composed of six subunits: RnfA, RnfB, RnfC, RnfD, RnfE and RnfG.

Its subcellular location is the cell inner membrane. Its function is as follows. Part of a membrane-bound complex that couples electron transfer with translocation of ions across the membrane. The chain is Ion-translocating oxidoreductase complex subunit E from Cellvibrio japonicus (strain Ueda107) (Pseudomonas fluorescens subsp. cellulosa).